We begin with the raw amino-acid sequence, 129 residues long: Omega-scoloptoxin(05)-Ssm1a (129 aa).

An N-terminal signal peptide occupies residues 1-24 (MPSLCIIALFGTLTFYTLIPSIHT). Residues 25 to 46 (LKCVRCDGPMSNYDCKTTYPAA) constitute a propeptide that is removed on maturation.

This sequence belongs to the scoloptoxin-05 family. Post-translationally, contains 3 disulfide bonds. Expressed by the venom gland.

It localises to the secreted. Functionally, toxin that increase voltage-gated calcium channel (Cav) currents in DRG neurons by 70% and 120%, when 1 uM and 10 uM are tested, respectively. The polypeptide is Omega-scoloptoxin(05)-Ssm1a (Scolopendra mutilans (Chinese red-headed centipede)).